The primary structure comprises 794 residues: Signal transducer and activator of transcription 5A (794 aa).

The residue at position 90 (Tyr90) is a Phosphotyrosine. The residue at position 129 (Ser129) is a Phosphoserine. Residues 589–686 (WNDGAILGFV…EVFSKYYTPV (98 aa)) form the SH2 domain. Tyr682 carries the phosphotyrosine modification. A Phosphotyrosine; by JAK2 modification is found at Tyr694. The segment at 765–794 (EELLRRPNGQSGPLSPPPAGLFTPARGSLS) is disordered.

This sequence belongs to the transcription factor STAT family. As to quaternary structure, forms a homodimer or a heterodimer with a related family member. Binds NR3C1. Interacts with NCOA1 and SOCS7. Interacts with ERBB4. Interacts with EBF4. Interacts with CD69. Post-translationally, ISGylated. Tyrosine phosphorylated in response to KITLG/SCF, IL2, IL3, IL7, IL15, CSF2/GMCSF, GH1, PRL, EPO and THPO. Activated KIT promotes phosphorylation on tyrosine residues and subsequent translocation to the nucleus. Tyrosine phosphorylated in response to constitutively activated FGFR1, FGFR2, FGFR3 and FGFR4. Tyrosine phosphorylation is required for DNA-binding activity and dimerization. Serine phosphorylation is also required for maximal transcriptional activity. Tyrosine phosphorylated in response to signaling via activated FLT3; wild-type FLT3 results in much weaker phosphorylation than constitutively activated mutant FLT3. Alternatively, can be phosphorylated by JAK2 at Tyr-694. In terms of tissue distribution, found in mammary gland and, in lesser extent, in ovary, thymus, spleen, kidney, lung, muscle and adrenal gland.

The protein resides in the cytoplasm. The protein localises to the nucleus. Carries out a dual function: signal transduction and activation of transcription. Mediates cellular responses to the cytokine KITLG/SCF and other growth factors. May mediate cellular responses to activated FGFR1, FGFR2, FGFR3 and FGFR4. Binds to the GAS element and activates PRL-induced transcription. Regulates the expression of milk proteins during lactation. The chain is Signal transducer and activator of transcription 5A (STAT5A) from Ovis aries (Sheep).